The primary structure comprises 252 residues: 2-succinyl-6-hydroxy-2,4-cyclohexadiene-1-carboxylate synthase (252 aa).

It belongs to the AB hydrolase superfamily. MenH family. In terms of assembly, monomer.

It catalyses the reaction 5-enolpyruvoyl-6-hydroxy-2-succinyl-cyclohex-3-ene-1-carboxylate = (1R,6R)-6-hydroxy-2-succinyl-cyclohexa-2,4-diene-1-carboxylate + pyruvate. It participates in quinol/quinone metabolism; 1,4-dihydroxy-2-naphthoate biosynthesis; 1,4-dihydroxy-2-naphthoate from chorismate: step 3/7. It functions in the pathway quinol/quinone metabolism; menaquinone biosynthesis. In terms of biological role, catalyzes a proton abstraction reaction that results in 2,5-elimination of pyruvate from 2-succinyl-5-enolpyruvyl-6-hydroxy-3-cyclohexene-1-carboxylate (SEPHCHC) and the formation of 2-succinyl-6-hydroxy-2,4-cyclohexadiene-1-carboxylate (SHCHC). The polypeptide is 2-succinyl-6-hydroxy-2,4-cyclohexadiene-1-carboxylate synthase (Salmonella paratyphi B (strain ATCC BAA-1250 / SPB7)).